The sequence spans 731 residues: Replication restart protein PriA (731 aa).

Residues 1–98 (MSVAHVALPV…HPIGDVLFHA (98 aa)) are 3'BD. A WH region spans residues 115–177 (WYWFATEQGQ…RGKGLAELAC (63 aa)). Residues 200–375 (TEQATAVGAI…VRQGKYRQLT (176 aa)) are helicase lobe 1. Residues 210 to 376 (HSAADRFSAW…RQGKYRQLTL (167 aa)) form the Helicase ATP-binding domain. ATP is bound at residue 223-230 (GITGSGKT). Gly-226, Gly-228, Lys-229, Thr-230, Glu-231, and Arg-263 together coordinate ADP. The DEAH box motif lies at 319–322 (DEEH). The Aromatic-rich loop (ARL) motif lies at 326-340 (YKQQEGWRYHARDLA). The tract at residues 387 to 430 (QQHVLDLKGQPLQAGLSPALISRMRQHLQADNQVILFLNRRGFA) is helicase lobe 2, N-terminus. The CRR stretch occupies residues 431–485 (PALLCHDCGWIAECPRCDSYYTLHQAQHHLRCHHCDSQRPIPRQCPSCGSTHLVP). Cys-435, Cys-438, Cys-444, Cys-447, Cys-462, Cys-465, Cys-475, and Cys-478 together coordinate Zn(2+). Residues 470 to 637 (PIPRQCPSCG…QLPPWTSHVL (168 aa)) form the Helicase C-terminal domain. Positions 486–626 (VGIGTEQLEQ…AEQALAERQT (141 aa)) are helicase lobe 2, C-terminus. An ADP-binding site is contributed by Lys-543. Residues 633–731 (TSHVLIRAED…WVLDVDPIEG (99 aa)) form a CTD region.

Belongs to the helicase family. PriA subfamily. As to quaternary structure, binds SSB. Component of the replication restart primosome. Requires Zn(2+) as cofactor.

The enzyme catalyses Couples ATP hydrolysis with the unwinding of duplex DNA by translocating in the 3'-5' direction.. It catalyses the reaction ATP + H2O = ADP + phosphate + H(+). Its activity is regulated as follows. ATPase activity is stimulated by single-stranded binding protein (SSB). In terms of biological role, initiates the restart of stalled replication forks, which reloads the replicative helicase on sites other than the origin of replication. Recognizes and binds to abandoned replication forks and remodels them to uncover a helicase loading site. Promotes assembly of the primosome at these replication forks. Recognizes abandoned replication forks and remodels SSB on ssDNA to uncover a loading site for DnaB. Binds replication fork DNA, has DNA-dependent ATPase activity in the presence of replication fork DNA, restores normal cell growth and SOS induction to E.coli mutant pirA304. The sequence is that of Replication restart protein PriA from Klebsiella pneumoniae subsp. pneumoniae (strain ATCC 700721 / MGH 78578).